We begin with the raw amino-acid sequence, 257 residues long: uncharacterized protein (257 aa).

An N-terminal signal peptide occupies residues 1–22; that stretch reads MIHSRKLRLWLYLVLLAVFIGA. Cysteine 23 carries the N-palmitoyl cysteine lipid modification. The S-diacylglycerol cysteine moiety is linked to residue cysteine 23.

Belongs to the staphylococcal tandem lipoprotein family.

Its subcellular location is the cell membrane. This is an uncharacterized protein from Staphylococcus aureus (strain Mu50 / ATCC 700699).